The following is a 109-amino-acid chain: MSILKLLPQSFVSSLQKSSWVEYRKMGLYFADLYNNTEANQEVYRRLPFDVLVQRDRRLRVAIDLSLKKQLLPESEWSDNQKDFEFTEMIEKYTEQVERENDLRRSFRE.

This sequence belongs to the UQCRB/QCR7 family. As to quaternary structure, component of the ubiquinol-cytochrome c oxidoreductase (cytochrome b-c1 complex, complex III, CIII), a multisubunit enzyme composed of 3 respiratory subunits cytochrome b, cytochrome c1 and Rieske protein, 2 core protein subunits, and additional low-molecular weight protein subunits. The complex exists as an obligatory dimer and forms supercomplexes (SCs) in the inner mitochondrial membrane with cytochrome c oxidase (complex IV, CIV).

Its subcellular location is the mitochondrion inner membrane. In terms of biological role, component of the ubiquinol-cytochrome c oxidoreductase, a multisubunit transmembrane complex that is part of the mitochondrial electron transport chain which drives oxidative phosphorylation. The respiratory chain contains 3 multisubunit complexes succinate dehydrogenase (complex II, CII), ubiquinol-cytochrome c oxidoreductase (cytochrome b-c1 complex, complex III, CIII) and cytochrome c oxidase (complex IV, CIV), that cooperate to transfer electrons derived from NADH and succinate to molecular oxygen, creating an electrochemical gradient over the inner membrane that drives transmembrane transport and the ATP synthase. The cytochrome b-c1 complex catalyzes electron transfer from ubiquinol to cytochrome c, linking this redox reaction to translocation of protons across the mitochondrial inner membrane, with protons being carried across the membrane as hydrogens on the quinol. In the process called Q cycle, 2 protons are consumed from the matrix, 4 protons are released into the intermembrane space and 2 electrons are passed to cytochrome c. This chain is Probable cytochrome b-c1 complex subunit 7, found in Dictyostelium discoideum (Social amoeba).